The sequence spans 431 residues: MFVDQVKISLKAGDGGNGITAYRREKYVPFGGPAGGDGGDGASIIFEVDEGLRTLLDFRYQTHFKAKRGDGGQSSNMHGKNAEHLVLKVPPGTIIKSADSEEVLADLVENGQRAVVAKGGRGGRGNSRFASPRNPAPDFSENGEPGEEIEVTLELKLLADVGLVGFPSVGKSTLLSIVSKAKPKIGAYHFTTIKPNLGVVSTKDQRSFVMADLPGLIEGASEGIGLGHQFLKHVERTKVIVHMIDMSGSEGRDPYEDYKVINEELSAYEHRLEERPQIVVANKMDMPNAEDNLALFKEEINDDSVHIIPLSTFKHDHIDELLYAIADKLEAVKDIDFSKDEEEDLGVNRVVYKHTPSQDKFTITRDDDAAYVVSGKAIERMFKMTDFNSDPAVRRFARQMRSMGIDDALRARGCRNGDIVRILGGEFEFVE.

In terms of domain architecture, Obg spans 1-158 (MFVDQVKISL…IEVTLELKLL (158 aa)). Residues 118–144 (KGGRGGRGNSRFASPRNPAPDFSENGE) form a disordered region. The 172-residue stretch at 159 to 330 (ADVGLVGFPS…LLYAIADKLE (172 aa)) folds into the OBG-type G domain. GTP is bound by residues 165–172 (GFPSVGKS), 190–194 (FTTIK), 212–215 (DLPG), 282–285 (NKMD), and 311–313 (STF). The Mg(2+) site is built by S172 and T192. Positions 353–431 (KHTPSQDKFT…ILGGEFEFVE (79 aa)) constitute an OCT domain.

This sequence belongs to the TRAFAC class OBG-HflX-like GTPase superfamily. OBG GTPase family. As to quaternary structure, monomer. It depends on Mg(2+) as a cofactor.

The protein localises to the cytoplasm. In terms of biological role, an essential GTPase which binds GTP, GDP and possibly (p)ppGpp with moderate affinity, with high nucleotide exchange rates and a fairly low GTP hydrolysis rate. Plays a role in control of the cell cycle, stress response, ribosome biogenesis and in those bacteria that undergo differentiation, in morphogenesis control. The sequence is that of GTPase Obg from Staphylococcus saprophyticus subsp. saprophyticus (strain ATCC 15305 / DSM 20229 / NCIMB 8711 / NCTC 7292 / S-41).